Reading from the N-terminus, the 89-residue chain is MANIKSAKKRAKQTVVRNARNVAQRSMLRTAVKKVIKALDANDAAGAEAAFAVAQPILDRFSARGLIHKNKAARHKSRLNDRIKALKAA.

The protein belongs to the bacterial ribosomal protein bS20 family.

Binds directly to 16S ribosomal RNA. This is Small ribosomal subunit protein bS20 from Stenotrophomonas maltophilia (strain K279a).